The primary structure comprises 477 residues: Putative WAS protein family homolog 4 (477 aa).

The segment at 1-180 is WHD1; sequence MSGVMCLKAS…EGLGGLPSNI (180 aa). Disordered stretches follow at residues 310–420 and 434–477; these read QDGV…QGGH and KGIS…DWES. The segment covering 315–327 has biased composition (pro residues); that stretch reads TPPPPPPPPPPAP. The segment at 362–477 is VCA; that stretch reads QGAPREVVDP…QAEDEDDWES (116 aa). The WH2 domain maps to 374-396; that stretch reads GWATLLESIRQAGGIGKAKLRSM. Over residues 395–411 the composition is skewed to basic and acidic residues; that stretch reads SMKERKLEKQQQKEQEQ. A compositionally biased stretch (gly residues) spans 437–449; that stretch reads SGKGPGAGDGPGG.

Belongs to the WASH1 family. As to quaternary structure, interacts (via WHD1 region) with WASHC2C; the interaction is direct.

It localises to the early endosome membrane. The protein localises to the recycling endosome membrane. Functionally, may act as a nucleation-promoting factor at the surface of endosomes, where it recruits and activates the Arp2/3 complex to induce actin polymerization, playing a key role in the fission of tubules that serve as transport intermediates during endosome sorting. The sequence is that of Putative WAS protein family homolog 4 (WASH4P) from Homo sapiens (Human).